Here is a 194-residue protein sequence, read N- to C-terminus: Peptidyl-tRNA hydrolase (194 aa).

Tyr17 provides a ligand contact to tRNA. The Proton acceptor role is filled by His22. 3 residues coordinate tRNA: Tyr68, Asn70, and Asn116.

The protein belongs to the PTH family. As to quaternary structure, monomer.

It is found in the cytoplasm. The catalysed reaction is an N-acyl-L-alpha-aminoacyl-tRNA + H2O = an N-acyl-L-amino acid + a tRNA + H(+). In terms of biological role, hydrolyzes ribosome-free peptidyl-tRNAs (with 1 or more amino acids incorporated), which drop off the ribosome during protein synthesis, or as a result of ribosome stalling. Its function is as follows. Catalyzes the release of premature peptidyl moieties from peptidyl-tRNA molecules trapped in stalled 50S ribosomal subunits, and thus maintains levels of free tRNAs and 50S ribosomes. This Pseudomonas paraeruginosa (strain DSM 24068 / PA7) (Pseudomonas aeruginosa (strain PA7)) protein is Peptidyl-tRNA hydrolase.